Here is a 284-residue protein sequence, read N- to C-terminus: Tropomyosin (284 aa).

A coiled-coil region spans residues 1–273 (MEAIKKKMQA…KEKYKSISDE (273 aa)).

The protein belongs to the tropomyosin family. Homodimer. As to expression, ubiquitous, but especially prevalent in the anterior muscle bundles associated with legs. Expression in the mid and posterior regions is probably related to the numerous, small muscle bundles associated with the digestive and reproductive systems (at protein level).

Functionally, tropomyosin, in association with the troponin complex, plays a central role in the calcium dependent regulation of muscle contraction. This Psoroptes ovis (Sheep scab mite) protein is Tropomyosin.